Here is a 418-residue protein sequence, read N- to C-terminus: L-glutamine:2-deoxy-scyllo-inosose aminotransferase (418 aa).

Position 192 is an N6-(pyridoxal phosphate)lysine (K192).

It belongs to the DegT/DnrJ/EryC1 family. L-glutamine:2-deoxy-scyllo-inosose/scyllo-inosose aminotransferase subfamily. Pyridoxal 5'-phosphate is required as a cofactor.

The enzyme catalyses 2-deoxy-L-scyllo-inosose + L-glutamine = 2-deoxy-scyllo-inosamine + 2-oxoglutaramate. It catalyses the reaction 3-amino-2,3-dideoxy-scyllo-inosose + L-glutamine = 2-deoxystreptamine + 2-oxoglutaramate. Its pathway is metabolic intermediate biosynthesis; 2-deoxystreptamine biosynthesis; 2-deoxystreptamine from D-glucose 6-phosphate: step 2/4. It participates in metabolic intermediate biosynthesis; 2-deoxystreptamine biosynthesis; 2-deoxystreptamine from D-glucose 6-phosphate: step 4/4. It functions in the pathway antibiotic biosynthesis; butirosin biosynthesis. Catalyzes the PLP-dependent transamination of 2-deoxy-scyllo-inosose (2-DOI) to form 2-deoxy-scyllo-inosamine (2-DOIA) using L-glutamine as the amino donor. Also catalyzes the transamination of 3-amino-2,3-dideoxy-scyllo-inosose (keto-2-DOIA) into 2-deoxystreptamine (2-DOS). This is L-glutamine:2-deoxy-scyllo-inosose aminotransferase (btrR) from Niallia circulans (Bacillus circulans).